Reading from the N-terminus, the 183-residue chain is UPF0398 protein BLi02355/BL05236 (183 aa).

This sequence belongs to the UPF0398 family.

This is UPF0398 protein BLi02355/BL05236 from Bacillus licheniformis (strain ATCC 14580 / DSM 13 / JCM 2505 / CCUG 7422 / NBRC 12200 / NCIMB 9375 / NCTC 10341 / NRRL NRS-1264 / Gibson 46).